A 118-amino-acid polypeptide reads, in one-letter code: Holo-[acyl-carrier-protein] synthase (118 aa).

Mg(2+)-binding residues include Asp-8 and Glu-58.

This sequence belongs to the P-Pant transferase superfamily. AcpS family. Mg(2+) serves as cofactor.

It localises to the cytoplasm. It carries out the reaction apo-[ACP] + CoA = holo-[ACP] + adenosine 3',5'-bisphosphate + H(+). Transfers the 4'-phosphopantetheine moiety from coenzyme A to a Ser of acyl-carrier-protein. This is Holo-[acyl-carrier-protein] synthase from Streptococcus pyogenes serotype M28 (strain MGAS6180).